Reading from the N-terminus, the 459-residue chain is Cysteine--tRNA ligase (459 aa).

Residue cysteine 28 participates in Zn(2+) binding. The 'HIGH' region signature appears at 30–40; it reads ITIYDLCHIGH. Cysteine 209, histidine 234, and glutamate 238 together coordinate Zn(2+). The 'KMSKS' region motif lies at 266–270; sequence KMSKS. Position 269 (lysine 269) interacts with ATP.

Belongs to the class-I aminoacyl-tRNA synthetase family. Monomer. Zn(2+) is required as a cofactor.

It is found in the cytoplasm. The catalysed reaction is tRNA(Cys) + L-cysteine + ATP = L-cysteinyl-tRNA(Cys) + AMP + diphosphate. The sequence is that of Cysteine--tRNA ligase from Shewanella sediminis (strain HAW-EB3).